A 317-amino-acid polypeptide reads, in one-letter code: UDP-3-O-acylglucosamine N-acyltransferase (317 aa).

Residue histidine 229 is the Proton acceptor of the active site.

This sequence belongs to the transferase hexapeptide repeat family. LpxD subfamily. In terms of assembly, homotrimer.

The catalysed reaction is a UDP-3-O-[(3R)-3-hydroxyacyl]-alpha-D-glucosamine + a (3R)-hydroxyacyl-[ACP] = a UDP-2-N,3-O-bis[(3R)-3-hydroxyacyl]-alpha-D-glucosamine + holo-[ACP] + H(+). It participates in bacterial outer membrane biogenesis; LPS lipid A biosynthesis. Catalyzes the N-acylation of UDP-3-O-acylglucosamine using 3-hydroxyacyl-ACP as the acyl donor. Is involved in the biosynthesis of lipid A, a phosphorylated glycolipid that anchors the lipopolysaccharide to the outer membrane of the cell. The chain is UDP-3-O-acylglucosamine N-acyltransferase from Campylobacter curvus (strain 525.92).